Reading from the N-terminus, the 309-residue chain is Taste receptor type 2 member 46 (309 aa).

A topological domain (extracellular) is located at residue methionine 1. Residues 2–22 (ITFLPIIFSILIVVTFVIGNF) traverse the membrane as a helical segment. Residues 23-46 (ANGFIALANSIEWFKRQKISFADQ) are Cytoplasmic-facing. The chain crosses the membrane as a helical span at residues 47–67 (ILTALAVSRVGLLWVLLLNWY). The Extracellular segment spans residues 68–86 (ATELNPAFYSIEVRITAYN). Residues 87–107 (LWAVINHFSNWLATSLSIFYL) traverse the membrane as a helical segment. Over 108 to 126 (LKIANFSNLIFLRLKRRVK) the chain is Cytoplasmic. Residues 127–147 (SVVLVILLGPLLFLVCHLFVI) form a helical membrane-spanning segment. The Extracellular segment spans residues 148 to 178 (NMNQIIWTKEYEGNMTWKIKLRSAMYLSNIT). Residues asparagine 161 and asparagine 176 are each glycosylated (N-linked (GlcNAc...) asparagine). The helical transmembrane segment at 179-199 (VTILANLVPFTLTLISFLLLI) threads the bilayer. Residues 200–229 (CSLCKHLKKMQLHGKGSQDPSMKVHIKALQ) are Cytoplasmic-facing. Residues 230–250 (TVTSFLLLCAIYFLSIIMSVW) form a helical membrane-spanning segment. The Extracellular portion of the chain corresponds to 251-259 (SFESLENKP). Residues 260–280 (VFMFCEAITFSYPSTHPFILI) form a helical membrane-spanning segment. Residues 281-309 (WGNKKLKQTFLSVLWHVRYWVKGEEPSSP) lie on the Cytoplasmic side of the membrane.

It belongs to the G-protein coupled receptor T2R family.

Its subcellular location is the membrane. The protein localises to the cell projection. It localises to the cilium membrane. Functionally, receptor that may play a role in the perception of bitterness and is gustducin-linked. May play a role in sensing the chemical composition of the gastrointestinal content. The activity of this receptor may stimulate alpha gustducin, mediate PLC-beta-2 activation and lead to the gating of TRPM5. In airway epithelial cells, binding of bitter compounds increases the intracellular calcium ion concentration and stimulates ciliary beat frequency. In Pan paniscus (Pygmy chimpanzee), this protein is Taste receptor type 2 member 46 (TAS2R46).